Consider the following 151-residue polypeptide: MAPRKGKAPKEEQVISLGPQVADGENVFGVAHIFASFNDTFVHVTDLSGKETIARVTGGMKVKADRDESSPYAAMLAAQDVAVRCKEIGITALHVKLRATGGNRTKTPGPGAQSALRALARSGMKIGRIEDVTPIPSDCTRRKGGRRGRRL.

It belongs to the universal ribosomal protein uS11 family.

This chain is Small ribosomal subunit protein uS11 (RPS14), found in Podocoryna carnea (Hydrozoan).